The sequence spans 23 residues: Caerin-4.2 (23 aa).

In terms of tissue distribution, expressed by the skin parotoid and/or rostral glands.

It is found in the secreted. Functionally, antibacterial peptide, that adopts an alpha helical conformation which can disrupt bacterial membranes. Each caerin displays a different antimicrobial specificity. The polypeptide is Caerin-4.2 (Ranoidea caerulea (Green tree frog)).